A 197-amino-acid chain; its full sequence is Rac-like GTP-binding protein 6 (197 aa).

13–20 is a GTP binding site; it reads GDGAVGKT. Residues 35-43 carry the Effector region motif; the sequence is YVPTVFDNF. Residues 60-64 and 118-121 each bind GTP; these read DTAGQ and TKLD. The residue at position 194 (Cys-194) is a Cysteine methyl ester. Cys-194 carries the S-geranylgeranyl cysteine lipid modification. Residues 195-197 constitute a propeptide, removed in mature form; that stretch reads SIL.

It belongs to the small GTPase superfamily. Rho family.

It localises to the cytoplasm. Its subcellular location is the membrane. Functionally, inactive GDP-bound Rho GTPases reside in the cytosol, are found in a complex with Rho GDP-dissociation inhibitors (Rho GDIs), and are released from the GDI protein in order to translocate to membranes upon activation. This chain is Rac-like GTP-binding protein 6 (RAC6), found in Oryza sativa subsp. japonica (Rice).